The following is a 453-amino-acid chain: Tol-Pal system protein TolB (453 aa).

Positions 1–31 (MINNLSISMTKVIKIILAIIIILFNTLSIFA) are cleaved as a signal peptide.

The protein belongs to the TolB family. As to quaternary structure, the Tol-Pal system is composed of five core proteins: the inner membrane proteins TolA, TolQ and TolR, the periplasmic protein TolB and the outer membrane protein Pal. They form a network linking the inner and outer membranes and the peptidoglycan layer.

The protein resides in the periplasm. Functionally, part of the Tol-Pal system, which plays a role in outer membrane invagination during cell division and is important for maintaining outer membrane integrity. In Orientia tsutsugamushi (strain Ikeda) (Rickettsia tsutsugamushi), this protein is Tol-Pal system protein TolB.